We begin with the raw amino-acid sequence, 478 residues long: NADH-quinone oxidoreductase subunit N (478 aa).

13 consecutive transmembrane segments (helical) span residues 7–27 (SFIP…LLIA), 46–66 (ILLV…VLTF), 74–94 (AFGD…FLFS), 109–129 (FTLG…YNLI), 163–183 (FVLG…IYGA), 204–224 (VVLS…LGAV), 237–257 (APTA…FAML), 273–293 (QSLI…ITLV), 300–320 (LLAY…IAAN), 328–348 (MFYT…IVAL), 371–391 (LALM…FVGF), 405–425 (GFTW…FYYL), and 451–471 (WAVS…SSLI).

The protein belongs to the complex I subunit 2 family. NDH-1 is composed of 14 different subunits. Subunits NuoA, H, J, K, L, M, N constitute the membrane sector of the complex.

It localises to the cell inner membrane. It catalyses the reaction a quinone + NADH + 5 H(+)(in) = a quinol + NAD(+) + 4 H(+)(out). In terms of biological role, NDH-1 shuttles electrons from NADH, via FMN and iron-sulfur (Fe-S) centers, to quinones in the respiratory chain. The immediate electron acceptor for the enzyme in this species is believed to be ubiquinone. Couples the redox reaction to proton translocation (for every two electrons transferred, four hydrogen ions are translocated across the cytoplasmic membrane), and thus conserves the redox energy in a proton gradient. The polypeptide is NADH-quinone oxidoreductase subunit N (Hydrogenovibrio crunogenus (strain DSM 25203 / XCL-2) (Thiomicrospira crunogena)).